The following is a 1116-amino-acid chain: Phosphatidylinositol 4-kinase beta 2 (1116 aa).

Residues 1 to 143 (MQMAQFLSLV…SRIQEKCQIA (143 aa)) enclose the PIK helical domain. 8 consecutive repeat copies span residues 210–229 (ADDNKIFKRLIPSPKVRDAL), 242–261 (CEKDGFFKRLLRDSRGEDDE), 264–283 (SNSEGFFKRLLKDNKSEEEE), 286–304 (NNSEGFFKRLRSSKGDEEE), 307–326 (SSSDGFFKRLLRDNKGDEEE), 329–348 (ANSEGFFKKLLRDSKNEDEE), 351–370 (ANTEGFFKKLFHESKNEDDK), and 378–396 (EEKDGFLKKLFKEKFDEKR). The segment at 210–507 (ADDNKIFKRL…FRDRDRSVED (298 aa)) is 11 X 20 AA approximate repeats (PPC). Positions 394–404 (EKRNGNERNET) are enriched in basic and acidic residues. The tract at residues 394–417 (EKRNGNERNETDETVYTDETSGED) is disordered. A compositionally biased stretch (acidic residues) spans 405–415 (DETVYTDETSG). Repeat 9 spans residues 418–436 (NGREGFFKKLFKEKFEDKP). 2 positions are modified to phosphoserine: Ser447 and Ser452. 2 tandem repeats follow at residues 452-470 (SSEFSLFRRLFRRHPEDVK) and 488-507 (PGTENFFRKLFRDRDRSVED). 2 disordered regions span residues 515 to 540 (KYKEKCPGSPKPQNNTPSKKPPLPNN) and 794 to 813 (GEAPPGLPLKGAGQDSSDAQ). One can recognise a PI3K/PI4K catalytic domain in the interval 830-1101 (EFWEGKRLRI…LISSSLDAWR (272 aa)). The interval 836-842 (RLRIRKD) is G-loop. Positions 964–972 (QIKDRHNGN) are catalytic loop. An activation loop region spans residues 983-1007 (HIDFGFMLSNSPGGVNFESAPFKLT).

It belongs to the PI3/PI4-kinase family. Type III PI4K subfamily.

It localises to the cell membrane. It is found in the golgi apparatus. Its subcellular location is the trans-Golgi network. The protein resides in the cytoplasmic vesicle membrane. The catalysed reaction is a 1,2-diacyl-sn-glycero-3-phospho-(1D-myo-inositol) + ATP = a 1,2-diacyl-sn-glycero-3-phospho-(1D-myo-inositol 4-phosphate) + ADP + H(+). Acts on phosphatidylinositol (PtdIns) in the first committed step in the production of the second messenger inositol-1,4,5-trisphosphate. Necessary for proper organization of the trans-Golgi network (TGN) and post-Golgi secretion in root hairs. Together with PI4KB1, required during polarized root hair expansion and pollen tube elongation. Functions redundantly with PI4KB1 upstream of the cold response phosphoinositide-dependent phospholipase C (PI-PLC) pathway. The sequence is that of Phosphatidylinositol 4-kinase beta 2 (PI4KB2) from Arabidopsis thaliana (Mouse-ear cress).